We begin with the raw amino-acid sequence, 353 residues long: Aliphatic aldoxime dehydratase (353 aa).

An aliphatic aldoxime is bound at residue Ser-219. His-299 contacts heme b. Residue His-320 coordinates an aliphatic aldoxime. The active site involves His-320.

This sequence belongs to the heme-containing dehydratase family. Homodimer. Requires heme b as cofactor.

The enzyme catalyses an aliphatic aldoxime = a nitrile + H2O. With respect to regulation, active when the heme iron is in the ferrous state. The activity is enhanced by reducing agents, such as Na(2)S, Na(2)S(2)(O4), 2-mercaptoethanol, and L-cysteine and supplementary additions of electron acceptors such as flavins, sulfite ion, and vitamin K3. The effect of various chemicals on the enzyme activity is different in the presence and absence of the reducing reagent, Na(2)S, which acts not only as a reductant but also changes the substrate specificity of the enzyme. Functionally, catalyzes the dehydration of aldoximes to their corresponding nitrile. Is active toward various arylalkyl- and alkyl-aldoximes, and to a lesser extent toward aryl-aldoximes. The sequence is that of Aliphatic aldoxime dehydratase from Rhodococcus erythropolis (Arthrobacter picolinophilus).